Reading from the N-terminus, the 280-residue chain is Small ribosomal subunit protein uS3 (280 aa).

Positions 38 to 106 (IRRLLSTGLE…QVQLNILEVR (69 aa)) constitute a KH type-2 domain. The tract at residues 215–280 (AAAAPAGAER…PAAEPQSTES (66 aa)) is disordered. Residues 238-280 (SGASGTTATGTEAGRAAASADESTAAGQPAEAAPAAEPQSTES) show a composition bias toward low complexity.

The protein belongs to the universal ribosomal protein uS3 family. In terms of assembly, part of the 30S ribosomal subunit. Forms a tight complex with proteins S10 and S14.

Binds the lower part of the 30S subunit head. Binds mRNA in the 70S ribosome, positioning it for translation. The chain is Small ribosomal subunit protein uS3 from Mycolicibacterium paratuberculosis (strain ATCC BAA-968 / K-10) (Mycobacterium paratuberculosis).